The following is a 643-amino-acid chain: Long-chain fatty acid transport protein 4 (643 aa).

The next 2 membrane-spanning stretches (helical) occupy residues 20–42 (LPWT…WRFI) and 139–156 (FVGL…AALI). An AMP-binding site is contributed by 243–254 (YIYTSGTTGLPK).

This sequence belongs to the ATP-dependent AMP-binding enzyme family. As to expression, expressed at highest levels in brain, testis, colon and kidney. Expressed at medium levels in heart and liver, small intestine and stomach. Expressed at low levels in peripheral leukocytes, bone marrow, skeletal muscle and aorta. Expressed in adipose tissue. Expressed in brain gray matter.

It is found in the endoplasmic reticulum membrane. The catalysed reaction is a fatty acid(in) = a fatty acid(out). It catalyses the reaction (9Z,12Z)-octadecadienoate(out) = (9Z,12Z)-octadecadienoate(in). The enzyme catalyses (9Z)-octadecenoate(out) = (9Z)-octadecenoate(in). It carries out the reaction hexadecanoate(out) = hexadecanoate(in). The catalysed reaction is a long-chain fatty acid + ATP + CoA = a long-chain fatty acyl-CoA + AMP + diphosphate. It catalyses the reaction hexadecanoate + ATP + CoA = hexadecanoyl-CoA + AMP + diphosphate. The enzyme catalyses (E)-hexadec-2-enoate + ATP + CoA = (2E)-hexadecenoyl-CoA + AMP + diphosphate. It carries out the reaction (9Z)-octadecenoate + ATP + CoA = (9Z)-octadecenoyl-CoA + AMP + diphosphate. The catalysed reaction is (5Z,8Z,11Z,14Z)-eicosatetraenoate + ATP + CoA = (5Z,8Z,11Z,14Z)-eicosatetraenoyl-CoA + AMP + diphosphate. It catalyses the reaction a very long-chain fatty acid + ATP + CoA = a very long-chain fatty acyl-CoA + AMP + diphosphate. The enzyme catalyses tetracosanoate + ATP + CoA = tetracosanoyl-CoA + AMP + diphosphate. Mediates the levels of long-chain fatty acids (LCFA) in the cell by facilitating their transport across cell membranes. Appears to be the principal fatty acid transporter in small intestinal enterocytes. Also functions as an acyl-CoA ligase catalyzing the ATP-dependent formation of fatty acyl-CoA using LCFA and very-long-chain fatty acids (VLCFA) as substrates, which prevents fatty acid efflux from cells and might drive more fatty acid uptake. Plays a role in the formation of the epidermal barrier. Required for fat absorption in early embryogenesis. Probably involved in fatty acid transport across the blood barrier. Indirectly inhibits RPE65 via substrate competition and via production of VLCFA derivatives like lignoceroyl-CoA. Prevents light-induced degeneration of rods and cones. The protein is Long-chain fatty acid transport protein 4 of Homo sapiens (Human).